A 926-amino-acid polypeptide reads, in one-letter code: Peripheral plasma membrane protein CASK (926 aa).

One can recognise a Protein kinase domain in the interval 12–276 (YELCEVIGKG…VYEALNHPWL (265 aa)). ATP contacts are provided by residues 18-26 (IGKGPFSVV) and K41. S51 is modified (phosphoserine). D141 is a catalytic residue. 2 positions are modified to phosphoserine; by autocatalysis: S151 and S155. Position 182 is a phosphothreonine (T182). K192 and S313 each carry phosphoserine. The calmodulin-binding stretch occupies residues 305 to 315 (KGAVLAAVSSH). L27 domains are found at residues 343–398 (AERA…SPQI) and 402–455 (PSDA…YSDE). The interval 482 to 909 (MENVTRVRLV…DETIRHLEEA (428 aa)) is required for interaction with NRXN1 (via C-terminal tail). Positions 489 to 564 (RLVQFQKNTD…MLREMRGSIT (76 aa)) constitute a PDZ domain. 2 positions are modified to phosphoserine: Y571 and S577. Residues 574-610 (QSSSCERDSPSTSRQSPANGHSSTNNSVSDLPSTTQP) are disordered. Residues 612-682 (GRQIYVRAQF…PSPELQEWRV (71 aa)) form the SH3 domain. A Guanylate kinase-like domain is found at 739-911 (RKTLVLLGAH…TIRHLEEAVE (173 aa)).

The protein in the N-terminal section; belongs to the protein kinase superfamily. CAMK Ser/Thr protein kinase family. CaMK subfamily. Belongs to the MAGUK family. As to quaternary structure, CASK and LIN7 form two mutually exclusive tripartite complexes with APBA1 or CASKIN1. Component of the brain-specific heterotrimeric complex (LIN-10-LIN-2-LIN-7 complex) composed of at least APBA1, CASK, and LIN7, which associates with the motor protein KIF17 to transport vesicles along microtubules. Forms a heterotrimeric complex with DLG1 and LIN7B via their L27 domains. Identified in a complex with ACTN4, IQGAP1, MAGI2, NPHS1, SPTAN1 and SPTBN1. Part of a complex containing CASK, TBR1 and TSPYL2. Interacts with WHRN. Interacts (via the PDZ, SH3 and guanylate kinase-like domains) with NRXN1 (via C-terminus). Interacts with CASKIN1, APBA1, LIN7(A/B/C) and L27 domain of DLG1 and isoform 2 of DLG4. Interacts with FCHSD2. Interacts with KIRREL3. Interacts with TBR1. Interacts with TSPYL2. Unlike other protein kinases, does not require a divalent cation such as magnesium for catalytic activity. is required as a cofactor. Ubiquitous. Expression is significantly greater in brain relative to kidney, lung, and liver and in fetal brain and kidney relative to lung and liver.

The protein resides in the nucleus. The protein localises to the cytoplasm. Its subcellular location is the cell membrane. It carries out the reaction L-seryl-[protein] + ATP = O-phospho-L-seryl-[protein] + ADP + H(+). The catalysed reaction is L-threonyl-[protein] + ATP = O-phospho-L-threonyl-[protein] + ADP + H(+). With respect to regulation, differs from archetypal CaMK members in that the kinase domain exhibits a constitutively active conformation and the autoinhibitory region does not engage in direct contact with the ATP-binding cleft, although it still binds Ca(2+)/CAM. Functionally, multidomain scaffolding Mg(2+)-independent protein kinase that catalyzes the phosphotransfer from ATP to proteins such as NRXN1, and plays a role in synaptic transmembrane protein anchoring and ion channel trafficking. Contributes to neural development and regulation of gene expression via interaction with the transcription factor TBR1. Binds to cell-surface proteins, including amyloid precursor protein, neurexins and syndecans. May mediate a link between the extracellular matrix and the actin cytoskeleton via its interaction with syndecan and with the actin/spectrin-binding protein 4.1. Component of the LIN-10-LIN-2-LIN-7 complex, which associates with the motor protein KIF17 to transport vesicles containing N-methyl-D-aspartate (NMDA) receptor subunit NR2B along microtubules. In Homo sapiens (Human), this protein is Peripheral plasma membrane protein CASK.